A 122-amino-acid polypeptide reads, in one-letter code: Small ribosomal subunit protein uS13 (122 aa).

Residues 93-122 are disordered; that stretch reads RRSLPVRGQRTHTNARTRKGPAKPIAGKKK.

The protein belongs to the universal ribosomal protein uS13 family. As to quaternary structure, part of the 30S ribosomal subunit. Forms a loose heterodimer with protein S19. Forms two bridges to the 50S subunit in the 70S ribosome.

Located at the top of the head of the 30S subunit, it contacts several helices of the 16S rRNA. In the 70S ribosome it contacts the 23S rRNA (bridge B1a) and protein L5 of the 50S subunit (bridge B1b), connecting the 2 subunits; these bridges are implicated in subunit movement. Contacts the tRNAs in the A and P-sites. The protein is Small ribosomal subunit protein uS13 of Chelativorans sp. (strain BNC1).